The sequence spans 1976 residues: DNA-directed RNA polymerase V subunit 1 (1976 aa).

C57, C60, C68, H71, C98, and C101 together coordinate Zn(2+). The Mg(2+) site is built by D449, D451, and D453. The bridging helix stretch occupies residues 751 to 763 (PYEEMAHSIAARE). The stretch at 1215–1216 (WG) is repeat 1. The interval 1215 to 1693 (WGKRVDVGTG…AKKFPSSGGW (479 aa)) is 18 X 2 AA repeats of [WG]-[GW] repeats. Disordered stretches follow at residues 1272 to 1291 (EEEMAEWAESPERDSALGEP), 1298 to 1718 (DFQN…EDNL), and 1847 to 1976 (FTKP…QTQT). Composition is skewed to basic and acidic residues over residues 1281–1291 (SPERDSALGEP) and 1298–1307 (DFQNLHDEGK). Repeat unit 2 spans residues 1329–1330 (WG). The segment covering 1332 to 1348 (SKSTGGEANPESNWEKT) has biased composition (polar residues). Residues 1349–1371 (TNVEKEDAWSSWNTRKDAQESSK) show a composition bias toward basic and acidic residues. 15 tandem repeats follow at residues 1378–1379 (WG), 1415–1416 (WG), 1430–1431 (WG), 1439–1440 (WG), 1447–1448 (WG), 1464–1465 (WG), 1498–1499 (WG), 1528–1529 (WG), 1545–1546 (WG), 1562–1563 (WG), 1596–1597 (WG), 1604–1605 (WG), 1621–1622 (WG), 1638–1639 (WG), and 1641–1642 (WG). Positions 1415–1430 (WGHKSVSDKSWDKKNW) are enriched in basic and acidic residues. Positions 1491–1501 (TESNGATWGSS) are enriched in polar residues. Positions 1648–1678 (AEDKDTNEDDRNPWVSLKETKSREKDDKERS) are enriched in basic and acidic residues. A run of 2 repeats spans residues 1680-1681 (WG) and 1692-1693 (GW). The span at 1869–1878 (EQSQPPNQSI) shows a compositional bias: polar residues. Low complexity predominate over residues 1886-1976 (QTQTQSQSPS…SSQSPSQTQT (91 aa)).

This sequence belongs to the RNA polymerase beta' chain family. Component of the RNA polymerase V complex. Interacts with NRPD4, NRPD2A, and (via C-terminus) with AGO4. Interacts with SUVH2. Mostly expressed in flowers, and, to a lower extent, in leaves. Present in sperm cells.

The protein localises to the nucleus. Its subcellular location is the nucleolus. The catalysed reaction is RNA(n) + a ribonucleoside 5'-triphosphate = RNA(n+1) + diphosphate. Its function is as follows. DNA-dependent RNA polymerase catalyzes the transcription of DNA into RNA using the four ribonucleoside triphosphates as substrates. Largest and catalytic component of RNA polymerase V involved in RNA-directed DNA methylation-dependent (RdDM) silencing of endogenous repeated sequences, including transposable elements. Also required for full erasure of methylation when the RNA trigger is withdrawn. Seems also involved in the synthesis of short-interfering RNAs (siRNA). Essential component of a self-reinforcing loop coupling de novo DNA methylation to siRNA production. Involved in the maintenance of post-transcriptional RNA silencing. In Arabidopsis thaliana (Mouse-ear cress), this protein is DNA-directed RNA polymerase V subunit 1 (NRPE1).